Consider the following 57-residue polypeptide: Preprotein translocase subunit SecG (57 aa).

The Cytoplasmic segment spans residues 1-33 (MARRRRYEGLNPFVAAGLIKFSEEGELERIKLT). A helical transmembrane segment spans residues 34-55 (PKSAVVISVALIAAILVLNLIH). The Extracellular segment spans residues 56–57 (PL).

Belongs to the SEC61-beta family. As to quaternary structure, component of the protein translocase complex. Heterotrimer consisting of alpha (SecY), beta (SecG) and gamma (SecE) subunits. Can form oligomers of the heterotrimer.

The protein resides in the cell membrane. Functionally, involved in protein export. The function of the beta subunit is unknown, but it may be involved in stabilization of the trimeric complex. This Pyrobaculum neutrophilum (strain DSM 2338 / JCM 9278 / NBRC 100436 / V24Sta) (Thermoproteus neutrophilus) protein is Preprotein translocase subunit SecG.